The sequence spans 160 residues: ATP synthase subunit b 3 (160 aa).

Residues 5–25 (PTFWVLVAFVLFVAAVWRIAA) form a helical membrane-spanning segment.

This sequence belongs to the ATPase B chain family. As to quaternary structure, F-type ATPases have 2 components, F(1) - the catalytic core - and F(0) - the membrane proton channel. F(1) has five subunits: alpha(3), beta(3), gamma(1), delta(1), epsilon(1). F(0) has three main subunits: a(1), b(2) and c(10-14). The alpha and beta chains form an alternating ring which encloses part of the gamma chain. F(1) is attached to F(0) by a central stalk formed by the gamma and epsilon chains, while a peripheral stalk is formed by the delta and b chains.

Its subcellular location is the cell inner membrane. Functionally, f(1)F(0) ATP synthase produces ATP from ADP in the presence of a proton or sodium gradient. F-type ATPases consist of two structural domains, F(1) containing the extramembraneous catalytic core and F(0) containing the membrane proton channel, linked together by a central stalk and a peripheral stalk. During catalysis, ATP synthesis in the catalytic domain of F(1) is coupled via a rotary mechanism of the central stalk subunits to proton translocation. Component of the F(0) channel, it forms part of the peripheral stalk, linking F(1) to F(0). This chain is ATP synthase subunit b 3, found in Rhodospirillum centenum (strain ATCC 51521 / SW).